Consider the following 311-residue polypeptide: Putative S-adenosyl-L-methionine-dependent methyltransferase MMAR_0358 (311 aa).

S-adenosyl-L-methionine is bound by residues aspartate 132 and 161–162 (DL).

The protein belongs to the UPF0677 family.

In terms of biological role, exhibits S-adenosyl-L-methionine-dependent methyltransferase activity. This Mycobacterium marinum (strain ATCC BAA-535 / M) protein is Putative S-adenosyl-L-methionine-dependent methyltransferase MMAR_0358.